We begin with the raw amino-acid sequence, 72 residues long: Cytochrome c oxidase subunit 2 (72 aa).

Residues 1 to 14 (MAHPSQLGFQDAAS) are Mitochondrial intermembrane-facing. A helical membrane pass occupies residues 15-45 (PVMEELLHFHDHALMIVFLISTLVLYIIVAM). Over 46-72 (VSTKLTNKHILDSQEVEIVWTILPAVI) the chain is Mitochondrial matrix.

The protein belongs to the cytochrome c oxidase subunit 2 family. Component of the cytochrome c oxidase (complex IV, CIV), a multisubunit enzyme composed of 14 subunits. The complex is composed of a catalytic core of 3 subunits MT-CO1, MT-CO2 and MT-CO3, encoded in the mitochondrial DNA, and 11 supernumerary subunits COX4I, COX5A, COX5B, COX6A, COX6B, COX6C, COX7A, COX7B, COX7C, COX8 and NDUFA4, which are encoded in the nuclear genome. The complex exists as a monomer or a dimer and forms supercomplexes (SCs) in the inner mitochondrial membrane with NADH-ubiquinone oxidoreductase (complex I, CI) and ubiquinol-cytochrome c oxidoreductase (cytochrome b-c1 complex, complex III, CIII), resulting in different assemblies (supercomplex SCI(1)III(2)IV(1) and megacomplex MCI(2)III(2)IV(2)). Found in a complex with TMEM177, COA6, COX18, COX20, SCO1 and SCO2. Interacts with TMEM177 in a COX20-dependent manner. Interacts with COX20. Interacts with COX16. Requires Cu cation as cofactor.

Its subcellular location is the mitochondrion inner membrane. The catalysed reaction is 4 Fe(II)-[cytochrome c] + O2 + 8 H(+)(in) = 4 Fe(III)-[cytochrome c] + 2 H2O + 4 H(+)(out). Its function is as follows. Component of the cytochrome c oxidase, the last enzyme in the mitochondrial electron transport chain which drives oxidative phosphorylation. The respiratory chain contains 3 multisubunit complexes succinate dehydrogenase (complex II, CII), ubiquinol-cytochrome c oxidoreductase (cytochrome b-c1 complex, complex III, CIII) and cytochrome c oxidase (complex IV, CIV), that cooperate to transfer electrons derived from NADH and succinate to molecular oxygen, creating an electrochemical gradient over the inner membrane that drives transmembrane transport and the ATP synthase. Cytochrome c oxidase is the component of the respiratory chain that catalyzes the reduction of oxygen to water. Electrons originating from reduced cytochrome c in the intermembrane space (IMS) are transferred via the dinuclear copper A center (CU(A)) of subunit 2 and heme A of subunit 1 to the active site in subunit 1, a binuclear center (BNC) formed by heme A3 and copper B (CU(B)). The BNC reduces molecular oxygen to 2 water molecules using 4 electrons from cytochrome c in the IMS and 4 protons from the mitochondrial matrix. The sequence is that of Cytochrome c oxidase subunit 2 (mt-co2) from Atractosteus spatula (Alligator gar).